Here is an 801-residue protein sequence, read N- to C-terminus: MVVMLTQEMSGGGGPKAEEGQLFVAVAVKGLIGDKLGGAGSRRAVRWAVDNLLPKADKFVMIHVIPTITSIPTPNILILMFTRMWVVTAGDRLPVEEVEESVVEMYVRDVKKEYETVFVPFLKMCKSTRSTKRYFRSRRTKGTGVPLTVLRYAPETCEVYIVCKDRITTKSMDPLINREPCTSPHAAATAHDFLRDWAASFHTLRSPTLPDPRQSTEAGTRRSASARELRFEALSLTCNKPKTPQSSKASSATTPEIFRRRRGSDIPQLNYSDFDKTCTKPQSNVENIVSEHRDSDRSPPETSRKSKKVEIEEEVERLKNELQSTVFKYKQACEELFSTQNKVKMLSTEYLNESKRVNNAVEKEELQRNTAALEKERYMKAVKEVETAKALLAREFCQRQIAEVNALRTYLEKKKVIDQLLGTDHRYRKYTIEEIVTATEGFSPEKVIGEGGYGKVYQCSLDSTPAAVKVVRLDTPEKKQEFLKEVEVLSQLRHPHVVLLLGACPENGCLVYEYLENGSLEEYIFHRKNKPPLPWFIRFRVIFEVACGLAFLHSSKPEPIVHRDLKPGNILLNRNYVSKIADVGLAKLVTDVAPDNVTMYRNSVLAGTLHYIDPEYHRTGTIRPKSDLYAFGIIILQLLTARNPSGIVPAVENAVKKGTLTEMLDKSVTDWPLAETEELARIGLKCAEFRCRDRPDLKSEVIPVLKRLVETANSKVKKEGSNLRAPSHYFCPILREIMEEPEIAADGFTYERKAILAWLEKHNISPVTRQKLDHFKLTPNHTLRSAIRDWKSRVRFSNVVV.

The tract at residues 205–309 is disordered; it reads RSPTLPDPRQ…PETSRKSKKV (105 aa). Residues 236–254 are compositionally biased toward polar residues; that stretch reads LTCNKPKTPQSSKASSATT. Positions 289 to 309 are enriched in basic and acidic residues; it reads VSEHRDSDRSPPETSRKSKKV. The stretch at 301–395 forms a coiled coil; it reads ETSRKSKKVE…ETAKALLARE (95 aa). Residues 442–705 form the Protein kinase domain; sequence FSPEKVIGEG…DLKSEVIPVL (264 aa). Residues 448–456 and lysine 469 contribute to the ATP site; that span reads IGEGGYGKV. Residue aspartate 564 is the Proton acceptor of the active site. The region spanning 724–797 is the U-box domain; the sequence is RAPSHYFCPI…RDWKSRVRFS (74 aa).

This sequence belongs to the protein kinase superfamily. Ser/Thr protein kinase family.

It catalyses the reaction L-seryl-[protein] + ATP = O-phospho-L-seryl-[protein] + ADP + H(+). The enzyme catalyses L-threonyl-[protein] + ATP = O-phospho-L-threonyl-[protein] + ADP + H(+). It carries out the reaction S-ubiquitinyl-[E2 ubiquitin-conjugating enzyme]-L-cysteine + [acceptor protein]-L-lysine = [E2 ubiquitin-conjugating enzyme]-L-cysteine + N(6)-ubiquitinyl-[acceptor protein]-L-lysine.. Its pathway is protein modification; protein ubiquitination. In terms of biological role, functions as an E3 ubiquitin ligase. The chain is U-box domain-containing protein 34 (PUB34) from Arabidopsis thaliana (Mouse-ear cress).